The sequence spans 566 residues: KsdD-like steroid dehydrogenase Rv0785 (566 aa).

23–54 is an FAD binding site; that stretch reads DAIVVGAGLAGLVAACELADRGLRVLILDQEN.

It belongs to the FAD-dependent oxidoreductase 2 family. The cofactor is FAD.

It participates in lipid metabolism; steroid biosynthesis. In terms of biological role, able to catalyze the elimination of the C-1 and C-2 hydrogen atoms of the A-ring from the polycyclic ring structure of 3-ketosteroids. The chain is KsdD-like steroid dehydrogenase Rv0785 from Mycobacterium tuberculosis (strain ATCC 25618 / H37Rv).